Reading from the N-terminus, the 100-residue chain is Urease subunit gamma (100 aa).

Belongs to the urease gamma subunit family. In terms of assembly, heterotrimer of UreA (gamma), UreB (beta) and UreC (alpha) subunits. Three heterotrimers associate to form the active enzyme.

The protein localises to the cytoplasm. It catalyses the reaction urea + 2 H2O + H(+) = hydrogencarbonate + 2 NH4(+). It functions in the pathway nitrogen metabolism; urea degradation; CO(2) and NH(3) from urea (urease route): step 1/1. This Streptomyces griseus subsp. griseus (strain JCM 4626 / CBS 651.72 / NBRC 13350 / KCC S-0626 / ISP 5235) protein is Urease subunit gamma.